The primary structure comprises 453 residues: Tubulin alpha-2 chain (453 aa).

Gln-11 is a binding site for GTP. Lys-40 bears the N6-acetyllysine mark. The GTP site is built by Glu-71, Gly-144, Thr-145, Thr-179, Asn-206, and Asn-228. Residue Glu-71 coordinates Mg(2+). Glu-254 is an active-site residue. A disordered region spans residues 432 to 453 (YEEVGAETAEGEGEEEDFGEEY).

It belongs to the tubulin family. As to quaternary structure, dimer of alpha and beta chains. A typical microtubule is a hollow water-filled tube with an outer diameter of 25 nm and an inner diameter of 15 nM. Alpha-beta heterodimers associate head-to-tail to form protofilaments running lengthwise along the microtubule wall with the beta-tubulin subunit facing the microtubule plus end conferring a structural polarity. Microtubules usually have 13 protofilaments but different protofilament numbers can be found in some organisms and specialized cells. Mg(2+) is required as a cofactor. Undergoes a tyrosination/detyrosination cycle, the cyclic removal and re-addition of a C-terminal tyrosine residue by the enzymes tubulin tyrosine carboxypeptidase (TTCP) and tubulin tyrosine ligase (TTL), respectively. In terms of processing, acetylation of alpha chains at Lys-40 stabilizes microtubules and affects affinity and processivity of microtubule motors. This modification has a role in multiple cellular functions, ranging from cell motility, cell cycle progression or cell differentiation to intracellular trafficking and signaling.

It localises to the cytoplasm. Its subcellular location is the cytoskeleton. It catalyses the reaction GTP + H2O = GDP + phosphate + H(+). In terms of biological role, tubulin is the major constituent of microtubules, a cylinder consisting of laterally associated linear protofilaments composed of alpha- and beta-tubulin heterodimers. Microtubules grow by the addition of GTP-tubulin dimers to the microtubule end, where a stabilizing cap forms. Below the cap, tubulin dimers are in GDP-bound state, owing to GTPase activity of alpha-tubulin. The chain is Tubulin alpha-2 chain (TUBA2) from Pelvetia fastigiata (Brown alga).